The following is a 783-amino-acid chain: LPS-assembly protein LptD (783 aa).

The signal sequence occupies residues M1–A24.

It belongs to the LptD family. As to quaternary structure, component of the lipopolysaccharide transport and assembly complex. Interacts with LptE and LptA.

The protein resides in the cell outer membrane. Its function is as follows. Together with LptE, is involved in the assembly of lipopolysaccharide (LPS) at the surface of the outer membrane. The chain is LPS-assembly protein LptD from Mannheimia succiniciproducens (strain KCTC 0769BP / MBEL55E).